We begin with the raw amino-acid sequence, 323 residues long: COP9 signalosome complex subunit 6 (323 aa).

The MPN domain occupies 37-170 (VALHPLVILN…VSVFESVIDI (134 aa)).

It belongs to the peptidase M67A family. CSN6 subfamily. In terms of assembly, component of the CSN complex, composed of COPS1/GPS1, COPS2, COPS3, COPS4, COPS5, COPS6, COPS7 (COPS7A or COPS7B), COPS8 and COPS9. In the complex, it probably interacts directly with COPS2, COPS4, COPS5, COPS7 (COPS7A or COPS7B) and COPS9. Interacts with the translation initiation factor EIF3S6. Interacts weakly with RBX1. Directly interacts with COP1 and 14-3-3 protein sigma/SFN. Interacts with ERCC6.

The protein resides in the cytoplasm. It localises to the nucleus. Functionally, component of the COP9 signalosome complex (CSN), a complex involved in various cellular and developmental processes. The CSN complex is an essential regulator of the ubiquitin (Ubl) conjugation pathway by mediating the deneddylation of the cullin subunits of SCF-type E3 ligase complexes, leading to decrease the Ubl ligase activity of SCF-type complexes such as SCF, CSA or DDB2. The complex is also involved in phosphorylation of p53/TP53, c-jun/JUN, IkappaBalpha/NFKBIA, ITPK1 and IRF8, possibly via its association with CK2 and PKD kinases. CSN-dependent phosphorylation of TP53 and JUN promotes and protects degradation by the Ubl system, respectively. Has some glucocorticoid receptor-responsive activity. Stabilizes COP1 through reducing COP1 auto-ubiquitination and decelerating COP1 turnover rate, hence regulates the ubiquitination of COP1 targets, including SFN. The protein is COP9 signalosome complex subunit 6 (COPS6) of Sus scrofa (Pig).